The primary structure comprises 387 residues: 3-ketoacyl-CoA thiolase (387 aa).

C91 serves as the catalytic Acyl-thioester intermediate. Active-site proton acceptor residues include H343 and C373.

The protein belongs to the thiolase-like superfamily. Thiolase family. In terms of assembly, heterotetramer of two alpha chains (FadB) and two beta chains (FadA).

Its subcellular location is the cytoplasm. It carries out the reaction an acyl-CoA + acetyl-CoA = a 3-oxoacyl-CoA + CoA. Its pathway is lipid metabolism; fatty acid beta-oxidation. In terms of biological role, catalyzes the final step of fatty acid oxidation in which acetyl-CoA is released and the CoA ester of a fatty acid two carbons shorter is formed. The sequence is that of 3-ketoacyl-CoA thiolase from Shigella sonnei (strain Ss046).